The sequence spans 231 residues: Large ribosomal subunit protein uL1 (231 aa).

This sequence belongs to the universal ribosomal protein uL1 family. In terms of assembly, part of the 50S ribosomal subunit.

In terms of biological role, binds directly to 23S rRNA. The L1 stalk is quite mobile in the ribosome, and is involved in E site tRNA release. Functionally, protein L1 is also a translational repressor protein, it controls the translation of the L11 operon by binding to its mRNA. The chain is Large ribosomal subunit protein uL1 from Ruthia magnifica subsp. Calyptogena magnifica.